Reading from the N-terminus, the 276-residue chain is MEDQLTIFIISDSLGETAKAIAKACLSQFPGHDDWHFQRFSYINSQERLEQVFEEASQKTVFMMFSLVDVALASYAQKRCESEHYAYVDLLTNVIQGISRISGIDPLGEPGILRRLDNDYFKRVESIEFAVKYDDGRDPRGILQADLVIIGISRTSKTPLSMFLADKNIKVINIPLVPEVPVPKELRMIDSRRIIGLTNSVDHLNQVRKVRLKSLGLSSTANYASLERILEETRYAEEVMKNLGCPIINVSDKAIEETATIILEILKTNGQVAKNL.

ADP is bound at residue 151–158 (GISRTSKT).

Belongs to the pyruvate, phosphate/water dikinase regulatory protein family. PDRP subfamily.

The enzyme catalyses N(tele)-phospho-L-histidyl/L-threonyl-[pyruvate, phosphate dikinase] + ADP = N(tele)-phospho-L-histidyl/O-phospho-L-threonyl-[pyruvate, phosphate dikinase] + AMP + H(+). It catalyses the reaction N(tele)-phospho-L-histidyl/O-phospho-L-threonyl-[pyruvate, phosphate dikinase] + phosphate + H(+) = N(tele)-phospho-L-histidyl/L-threonyl-[pyruvate, phosphate dikinase] + diphosphate. Its function is as follows. Bifunctional serine/threonine kinase and phosphorylase involved in the regulation of the pyruvate, phosphate dikinase (PPDK) by catalyzing its phosphorylation/dephosphorylation. In Streptococcus agalactiae serotype Ia (strain ATCC 27591 / A909 / CDC SS700), this protein is Putative pyruvate, phosphate dikinase regulatory protein.